Consider the following 922-residue polypeptide: GPI inositol-deacylase (922 aa).

The Cytoplasmic portion of the chain corresponds to 1–11 (MFLHSVNLWNL). Residues 12–32 (AFYVFMVFLATLGLWDVFFGF) form a helical membrane-spanning segment. Residues 33–597 (EENKCSMSYM…GQVVRFHGGA (565 aa)) lie on the Lumenal side of the membrane. Ser-174 is a catalytic residue. N-linked (GlcNAc...) asparagine glycosylation is found at Asn-363, Asn-402, and Asn-558. Residues 598–618 (LPAYVVSSILLAYGGQLYSLL) form a helical membrane-spanning segment. Residues 619-641 (STGYCLEYSTILDKEAKPYKVDP) are Cytoplasmic-facing. A helical membrane pass occupies residues 642–662 (FVIMIKFLLGYKWFKELWDAV). The Lumenal segment spans residues 663 to 668 (LLPELD). Residues 669–689 (AIVLTSQSMCFPLVSLILFLF) traverse the membrane as a helical segment. The Cytoplasmic segment spans residues 690 to 694 (GTCTA). The chain crosses the membrane as a helical span at residues 695 to 715 (YWSGLLSSTSVQLLSSLWLAL). Residues 716-733 (KRPAELPKDIKVMSPDLP) lie on the Lumenal side of the membrane. The helical transmembrane segment at 734–754 (VLTVVFLIVSWTTCGALAILL) threads the bilayer. Over 755–817 (SYLYYVFKVV…DAEDSLRMHS (63 aa)) the chain is Cytoplasmic. Residues 776 to 798 (NQPVNPKHSRRSEKKSNHHKDSA) form a disordered region. Residues 782 to 793 (KHSRRSEKKSNH) are compositionally biased toward basic residues. A helical membrane pass occupies residues 818-838 (TVINLLTWVVLLSMPSLIYWL). Over 839–894 (KNLRYYFKLSPDPCKPLAFLLIPAIAILGNTHTVSVKSSKLLKTVSQFPLPLAVGV) the chain is Lumenal. A helical membrane pass occupies residues 895–915 (IAFGSSHLYRVPCFVIIPLVF). At 916–922 (HALCNFM) the chain is on the cytoplasmic side.

This sequence belongs to the GPI inositol-deacylase family.

The protein resides in the endoplasmic reticulum membrane. Functionally, GPI inositol-deacylase that catalyzes the remove of the acyl chain linked to the 2-OH position of inositol ring from the GPI-anchored protein (GPI-AP) in the endoplasmic reticulum. Initiates the post-attachment remodeling phase of GPI-AP biogenesis and participates in endoplasmic reticulum (ER)-to-Golgi transport of GPI-anchored protein. The polypeptide is GPI inositol-deacylase (Mus musculus (Mouse)).